The chain runs to 374 residues: Serpin B8 (374 aa).

It belongs to the serpin family. Ov-serpin subfamily.

The protein resides in the cytoplasm. Functionally, has an important role in epithelial desmosome-mediated cell-cell adhesion. In Homo sapiens (Human), this protein is Serpin B8 (SERPINB8).